A 344-amino-acid polypeptide reads, in one-letter code: tRNA N6-adenosine threonylcarbamoyltransferase (344 aa).

Histidine 113 and histidine 117 together coordinate Fe cation. Substrate-binding positions include 135–139 (LVSGG), aspartate 169, glycine 182, aspartate 186, and asparagine 278. Aspartate 306 contributes to the Fe cation binding site.

The protein belongs to the KAE1 / TsaD family. Fe(2+) is required as a cofactor.

The protein resides in the cytoplasm. The enzyme catalyses L-threonylcarbamoyladenylate + adenosine(37) in tRNA = N(6)-L-threonylcarbamoyladenosine(37) in tRNA + AMP + H(+). In terms of biological role, required for the formation of a threonylcarbamoyl group on adenosine at position 37 (t(6)A37) in tRNAs that read codons beginning with adenine. Is involved in the transfer of the threonylcarbamoyl moiety of threonylcarbamoyl-AMP (TC-AMP) to the N6 group of A37, together with TsaE and TsaB. TsaD likely plays a direct catalytic role in this reaction. The sequence is that of tRNA N6-adenosine threonylcarbamoyltransferase from Corynebacterium efficiens (strain DSM 44549 / YS-314 / AJ 12310 / JCM 11189 / NBRC 100395).